Reading from the N-terminus, the 136-residue chain is Large ribosomal subunit protein uL16 (136 aa).

Belongs to the universal ribosomal protein uL16 family. Part of the 50S ribosomal subunit.

Its function is as follows. Binds 23S rRNA and is also seen to make contacts with the A and possibly P site tRNAs. This Shigella flexneri protein is Large ribosomal subunit protein uL16.